The following is a 66-amino-acid chain: Large ribosomal subunit protein uL29 (66 aa).

This sequence belongs to the universal ribosomal protein uL29 family.

This Syntrophobacter fumaroxidans (strain DSM 10017 / MPOB) protein is Large ribosomal subunit protein uL29.